The following is a 675-amino-acid chain: UvrABC system protein B (675 aa).

The region spanning 30–417 (SGIEQGNRNQ…SDQIVEQVVR (388 aa)) is the Helicase ATP-binding domain. 43–50 (GVTGSGKT) contacts ATP. Positions 96–119 (YYDYYQPEAYVPSSDTFIEKDAAI) match the Beta-hairpin motif. Residues 434-601 (QVDDVLSEIN…AVRQKVKEID (168 aa)) enclose the Helicase C-terminal domain. The 36-residue stretch at 637–672 (AKHMSKLEKEMLKASKELQFEQAARLRDEILRLKAQ) folds into the UVR domain.

This sequence belongs to the UvrB family. In terms of assembly, forms a heterotetramer with UvrA during the search for lesions. Interacts with UvrC in an incision complex.

It is found in the cytoplasm. Its function is as follows. The UvrABC repair system catalyzes the recognition and processing of DNA lesions. A damage recognition complex composed of 2 UvrA and 2 UvrB subunits scans DNA for abnormalities. Upon binding of the UvrA(2)B(2) complex to a putative damaged site, the DNA wraps around one UvrB monomer. DNA wrap is dependent on ATP binding by UvrB and probably causes local melting of the DNA helix, facilitating insertion of UvrB beta-hairpin between the DNA strands. Then UvrB probes one DNA strand for the presence of a lesion. If a lesion is found the UvrA subunits dissociate and the UvrB-DNA preincision complex is formed. This complex is subsequently bound by UvrC and the second UvrB is released. If no lesion is found, the DNA wraps around the other UvrB subunit that will check the other stand for damage. The chain is UvrABC system protein B from Acinetobacter baylyi (strain ATCC 33305 / BD413 / ADP1).